An 85-amino-acid chain; its full sequence is Large ribosomal subunit protein bL27 (85 aa).

Belongs to the bacterial ribosomal protein bL27 family.

In Sodalis glossinidius (strain morsitans), this protein is Large ribosomal subunit protein bL27.